A 670-amino-acid polypeptide reads, in one-letter code: E3 ubiquitin-protein ligase TRAF7 (670 aa).

Disordered regions lie at residues 1-37 (MSSG…FGPA) and 49-97 (GTST…SLHS). 2 stretches are compositionally biased toward polar residues: residues 15–31 (GPSN…TRME) and 49–67 (GTST…STLA). A phosphoserine mark is found at serine 61, serine 88, and serine 91. An RING-type zinc finger spans residues 131-165 (CQLCCSVFKDPVITTCGHTFCRRCALKSEKCPVDN). The TRAF-type zinc finger occupies 222 to 276 (HEGSCDYRPVRCPNNPSCPPLLRMNLEAHLKECEHIKCPHSKYGCTFIGNQDTYE). WD repeat units lie at residues 394–433 (GHQG…KCQK), 437–474 (GHDG…KVNT), 477–513 (AHDN…LKLK), 515–554 (ELTG…CIHV), 557–594 (TSGG…QVRT), 597–638 (GHVG…CTQT), and 641–669 (RHQG…KVWT).

Belongs to the WD repeat TRAF7 family. In terms of assembly, homodimer. Interacts with MAP3K3 and promotes the kinase activity of this enzyme. Post-translationally, phosphorylated by MAP3K3. In terms of processing, ubiquitinates itself upon phosphorylation. As to expression, ubiquitously expressed with high levels in skeletal muscle, heart, colon, spleen, kidney, liver and placenta.

The protein localises to the cytoplasmic vesicle. The protein resides in the cytoplasm. It is found in the nucleus. The catalysed reaction is S-ubiquitinyl-[E2 ubiquitin-conjugating enzyme]-L-cysteine + [acceptor protein]-L-lysine = [E2 ubiquitin-conjugating enzyme]-L-cysteine + N(6)-ubiquitinyl-[acceptor protein]-L-lysine.. It functions in the pathway protein modification; protein ubiquitination. Its function is as follows. E3 ubiquitin and SUMO-protein ligase that plays a role in different biological processes such as innate immunity, inflammation or apoptosis. Potentiates MAP3K3-mediated activation of JUN/AP1 and DDIT3 transcriptional regulators. Negatively regulates MYB transcriptional activity by sequestering it to the cytosol via SUMOylation. Plays a role in the phosphorylation of MAPK1 and/or MAPK3, probably via its interaction with MAP3K3. Negatively regulates RLR-mediated innate immunity by promoting 'Lys-48'-linked ubiquitination of TBK1 through its RING domain to inhibit the cellular antiviral response. Promotes 'Lys-29'-linked polyubiquitination of NEMO/IKBKG and RELA leading to targeting these two proteins to lysosomal degradative pathways, reducing the transcriptional activity of NF-kappa-B. This is E3 ubiquitin-protein ligase TRAF7 (TRAF7) from Homo sapiens (Human).